The sequence spans 119 residues: Non-specific lipid-transfer protein 12 (119 aa).

The signal sequence occupies residues 1–24 (MAFTPKIITCLIVLTIYMASPTES). 4 cysteine pairs are disulfide-bonded: Cys28–Cys75, Cys38–Cys52, Cys53–Cys98, and Cys73–Cys112.

The protein belongs to the plant LTP family.

Functionally, plant non-specific lipid-transfer proteins transfer phospholipids as well as galactolipids across membranes. May play a role in wax or cutin deposition in the cell walls of expanding epidermal cells and certain secretory tissues. This chain is Non-specific lipid-transfer protein 12 (LTP12), found in Arabidopsis thaliana (Mouse-ear cress).